The primary structure comprises 138 residues: Actin-related protein 2/3 complex subunit 5 (138 aa).

The disordered stretch occupies residues 1-21 (MNYEDDNVESGQAGKSDAEYK).

Belongs to the ARPC5 family. In terms of assembly, component of the Arp2/3 complex composed of arpB/Arp2, arpC/Arp3, arcA/p41-arc, arcB/p34-arc, arcC/p21-arc, arcD/p20-arc and arcE/p16-arc. Interacts with carmil (via the region between the LRR domain and COOH-terminal proline-rich domain); carmil is required for Arp2/3-dependent actin nucleation. Arp2/3 complex, MyoB, MyoC, and the alpha and beta subunits of capping protein all form a larger complex with carmil.

It is found in the cytoplasm. It localises to the cytoskeleton. The protein resides in the cytosol. The protein localises to the cell cortex. Its subcellular location is the cell projection. It is found in the pseudopodium. Functionally, functions as a component of the Arp2/3 complex which is involved in regulation of actin polymerization and together with an activating nucleation-promoting factor (NPF) mediates the formation of branched actin networks. Seems to contact the pointed end of the daughter actin filament. The Arp2/3 complex is involved in organizing the actin system in cell motility and chemotaxis, in phagocytosis and macropinocytosis, at late steps of endosome processing, and in mitosis. In concert with a group of other proteins, the Arp2/3 complex plays a general role in the rapid activation and adaptation of the actin system to its multiple functions. The chain is Actin-related protein 2/3 complex subunit 5 (arcE) from Dictyostelium discoideum (Social amoeba).